The following is a 453-amino-acid chain: DDB1- and CUL4-associated factor 12 (453 aa).

The segment covering 1 to 12 (MARKVVSRKRKA) has biased composition (basic residues). Positions 1-34 (MARKVVSRKRKAPASPGAGSDAQGPQFGWDHSLH) are disordered. The interval 1 to 38 (MARKVVSRKRKAPASPGAGSDAQGPQFGWDHSLHKRKR) is required for nuclear location and interaction with MOV10. S15 is modified (phosphoserine). WD repeat units follow at residues 81 to 122 (EREF…TSQI), 123 to 175 (TKIP…TLDP), 176 to 242 (VCVG…ALKD), 243 to 286 (IPKE…NTLS), 287 to 331 (KLLS…SYNV), and 332 to 366 (KSVCSRERGSGIRSVSFYEHIITVGTGQGSLLFYD).

The protein belongs to the WD repeat DCAF12 family. Component of the DCX(DCAF12) E3 ubiquitin ligase complex, at least composed of CUL4 (CUL4A or CUL4B), DDB1, DCAF12 and RBX1. As to expression, highly expressed in lung cancer tissues and some cancer cell lines. Restricted expression in normal testis.

It localises to the cytoplasm. The protein resides in the cytoskeleton. Its subcellular location is the microtubule organizing center. The protein localises to the centrosome. It is found in the nucleus. It participates in protein modification; protein ubiquitination. Its function is as follows. Substrate-recognition component of a DCX (DDB1-CUL4-X-box) E3 ubiquitin-protein ligase complex of the DesCEND (destruction via C-end degrons) pathway, which recognizes a C-degron located at the extreme C terminus of target proteins, leading to their ubiquitination and degradation. The C-degron recognized by the DesCEND pathway is usually a motif of less than ten residues and can be present in full-length proteins, truncated proteins or proteolytically cleaved forms. The DCX(DCAF12) complex specifically recognizes proteins with a diglutamate (Glu-Glu) at the C-terminus, such as MAGEA3, MAGEA6 and CCT5, leading to their ubiquitination and degradation. Ubiquitination of MAGEA3, MAGEA6 by DCX(DCAF12) complex is required for starvation-induced autophagy. Also directly recognizes the C-terminal glutamate-leucine (Glu-Leu) degron as an alternative degron in proteins such as MOV10, leading to their ubiquitination and degradation. Controls the protein level of MOV10 during spermatogenesis and in T cells, especially after their activation. The protein is DDB1- and CUL4-associated factor 12 of Homo sapiens (Human).